Here is a 174-residue protein sequence, read N- to C-terminus: Ferritin, heavy subunit (174 aa).

The Ferritin-like diiron domain occupies 7-156 (QNFHKDCEAA…DWVTNLRRLG (150 aa)). Glutamate 24, glutamate 59, histidine 62, glutamate 104, and glutamine 138 together coordinate Fe cation.

The protein belongs to the ferritin family. In liver, forms a heteromer consisting of middle and heavy subunits. The functional molecule forms a roughly spherical shell with a diameter of 12 nm and contains a central cavity into which the insoluble mineral iron core is deposited. In terms of tissue distribution, liver (at protein level).

It carries out the reaction 4 Fe(2+) + O2 + 4 H(+) = 4 Fe(3+) + 2 H2O. Stores iron in a soluble, non-toxic, readily available form. Important for iron homeostasis. Has ferroxidase activity. Iron is taken up in the ferrous form and deposited as ferric hydroxides after oxidation. Also plays a role in delivery of iron to cells. Mediates iron uptake in capsule cells of the developing kidney. Delivery to lysosomes is mediated by the cargo receptor NCOA4 for autophagic degradation and release of iron. The polypeptide is Ferritin, heavy subunit (Trematomus newnesi (Dusky notothen)).